Consider the following 98-residue polypeptide: MAQSNLRPLHDRVVVRRVESESKTAGGIIIPDTAKEKPQEGEIIAVGSGARDEAGKLVPLDVKAGDRILFGKWSGTEVKLNGEDLLIMKEADIMGIIG.

It belongs to the GroES chaperonin family. As to quaternary structure, heptamer of 7 subunits arranged in a ring. Interacts with the chaperonin GroEL.

Its subcellular location is the cytoplasm. Together with the chaperonin GroEL, plays an essential role in assisting protein folding. The GroEL-GroES system forms a nano-cage that allows encapsulation of the non-native substrate proteins and provides a physical environment optimized to promote and accelerate protein folding. GroES binds to the apical surface of the GroEL ring, thereby capping the opening of the GroEL channel. This chain is Co-chaperonin GroES 3, found in Mesorhizobium japonicum (strain LMG 29417 / CECT 9101 / MAFF 303099) (Mesorhizobium loti (strain MAFF 303099)).